Here is a 713-residue protein sequence, read N- to C-terminus: Glutamine--fructose-6-phosphate aminotransferase [isomerizing] (713 aa).

Cys-2 serves as the catalytic For GATase activity. A Glutamine amidotransferase type-2 domain is found at 2 to 316; it reads CGIFGYVNFL…DDDIAHIYDG (315 aa). SIS domains follow at residues 389–528 and 561–703; these read WLST…DSIS and CNSS…VDFP.

As to quaternary structure, homotetramer.

It carries out the reaction D-fructose 6-phosphate + L-glutamine = D-glucosamine 6-phosphate + L-glutamate. Its pathway is nucleotide-sugar biosynthesis; UDP-N-acetyl-alpha-D-glucosamine biosynthesis; alpha-D-glucosamine 6-phosphate from D-fructose 6-phosphate: step 1/1. Functionally, involved in amino sugar synthesis (formation of chitin, supplies the amino sugars of asparagine-linked oligosaccharides of glycoproteins). This chain is Glutamine--fructose-6-phosphate aminotransferase [isomerizing] (GFA1), found in Candida albicans (strain SC5314 / ATCC MYA-2876) (Yeast).